Here is a 103-residue protein sequence, read N- to C-terminus: Ig lambda chain C region (103 aa).

Positions 6–99 constitute an Ig-like domain; that stretch reads PTITLFPPSK…NGTSITKTLK (94 aa). A disulfide bridge links Cys28 with Cys85.

The protein is Ig lambda chain C region of Gallus gallus (Chicken).